The chain runs to 81 residues: Photosystem I iron-sulfur center (81 aa).

2 consecutive 4Fe-4S ferredoxin-type domains span residues 2–31 and 39–68; these read SHSVKIYDTCIGCTQCVRACPTDVLEMIPW and IASAPRTEDCVGCKRCESACPTDFLSVRVY. C11, C14, C17, C21, C48, C51, C54, and C58 together coordinate [4Fe-4S] cluster.

In terms of assembly, the eukaryotic PSI reaction center is composed of at least 11 subunits. The cofactor is [4Fe-4S] cluster.

The protein localises to the plastid. The protein resides in the chloroplast thylakoid membrane. It carries out the reaction reduced [plastocyanin] + hnu + oxidized [2Fe-2S]-[ferredoxin] = oxidized [plastocyanin] + reduced [2Fe-2S]-[ferredoxin]. Apoprotein for the two 4Fe-4S centers FA and FB of photosystem I (PSI); essential for photochemical activity. FB is the terminal electron acceptor of PSI, donating electrons to ferredoxin. The C-terminus interacts with PsaA/B/D and helps assemble the protein into the PSI complex. Required for binding of PsaD and PsaE to PSI. PSI is a plastocyanin-ferredoxin oxidoreductase, converting photonic excitation into a charge separation, which transfers an electron from the donor P700 chlorophyll pair to the spectroscopically characterized acceptors A0, A1, FX, FA and FB in turn. The polypeptide is Photosystem I iron-sulfur center (Vitis vinifera (Grape)).